The following is a 200-amino-acid chain: Small ribosomal subunit protein uS4 (200 aa).

Positions 22 to 43 (TGKELQKRPYPPGQHGPSQRRK) are disordered. The region spanning 92 to 152 (SRLDNLVYRL…EKSRNLQVIK (61 aa)) is the S4 RNA-binding domain.

It belongs to the universal ribosomal protein uS4 family. Part of the 30S ribosomal subunit. Contacts protein S5. The interaction surface between S4 and S5 is involved in control of translational fidelity.

One of the primary rRNA binding proteins, it binds directly to 16S rRNA where it nucleates assembly of the body of the 30S subunit. In terms of biological role, with S5 and S12 plays an important role in translational accuracy. In Geobacillus sp. (strain WCH70), this protein is Small ribosomal subunit protein uS4.